We begin with the raw amino-acid sequence, 436 residues long: 3-ketoacyl-CoA thiolase (436 aa).

The active-site Acyl-thioester intermediate is C99. Catalysis depends on proton acceptor residues H392 and C422.

The protein belongs to the thiolase-like superfamily. Thiolase family. Heterotetramer of two alpha chains (FadJ) and two beta chains (FadI).

It is found in the cytoplasm. It catalyses the reaction an acyl-CoA + acetyl-CoA = a 3-oxoacyl-CoA + CoA. It functions in the pathway lipid metabolism; fatty acid beta-oxidation. Its function is as follows. Catalyzes the final step of fatty acid oxidation in which acetyl-CoA is released and the CoA ester of a fatty acid two carbons shorter is formed. This is 3-ketoacyl-CoA thiolase from Escherichia coli O7:K1 (strain IAI39 / ExPEC).